We begin with the raw amino-acid sequence, 639 residues long: RNA polymerase II elongation factor ELL2 (639 aa).

Disordered stretches follow at residues 175–203, 291–326, 378–416, and 439–513; these read DTVP…SVSQ, LNPS…SDFI, PSTH…SFSQ, and PSSA…EGCT. Positions 291 to 317 are enriched in polar residues; sequence LNPSQNASTSRSESPLCSSKDAASSPQ. A compositionally biased stretch (low complexity) spans 378–401; it reads PSTHLPVSNPPQTVNSNSNSPSTP. Residues 457–469 are compositionally biased toward basic residues; that stretch reads SHKKSKKKSKKHK. The segment covering 470 to 479 has biased composition (basic and acidic residues); it reads EKDQIKKLDI. Positions 480–490 are enriched in acidic residues; sequence ETMEEKEEDLQ. 2 positions are modified to phosphoserine: Ser501 and Ser579. Residues 525-635 form the OCEL domain; it reads PDYLIKYIAI…LIGEFDQQQA (111 aa).

Belongs to the ELL/occludin family. In terms of assembly, component of the super elongation complex (SEC), at least composed of EAF1, EAF2, CDK9, MLLT3/AF9, AFF (AFF1 or AFF4), the P-TEFb complex and ELL (ELL, ELL2 or ELL3). Component of the little elongation complex (LEC), at least composed of ELL (ELL, ELL2 or ELL3), ZC3H8, ICE1 and ICE2. Interacts with AFF4; the interaction is direct and leads to stabilize ELL2 and prevent ELL2 ubiquitination. Interacts with EAF1 and EAF2. Post-translationally, ubiquitinated by SIAH1, leading to its degradation by the proteasome. Interaction with AFF4 stabilizes ELL2 and prevents ELL2 ubiquitination.

The protein resides in the nucleus. Its function is as follows. Elongation factor component of the super elongation complex (SEC), a complex required to increase the catalytic rate of RNA polymerase II transcription by suppressing transient pausing by the polymerase at multiple sites along the DNA. Component of the little elongation complex (LEC), a complex required to regulate small nuclear RNA (snRNA) gene transcription by RNA polymerase II and III. Plays a role in immunoglobulin secretion in plasma cells: directs efficient alternative mRNA processing, influencing both proximal poly(A) site choice and exon skipping, as well as immunoglobulin heavy chain (IgH) alternative processing. Probably acts by regulating histone modifications accompanying transition from membrane-specific to secretory IgH mRNA expression. The sequence is that of RNA polymerase II elongation factor ELL2 (Ell2) from Mus musculus (Mouse).